The sequence spans 436 residues: Glutamyl-tRNA reductase (436 aa).

Substrate-binding positions include 49 to 52 (TCNR), S109, 114 to 116 (EGQ), and Q120. The active-site Nucleophile is the C50. 198–203 (GAGRMS) serves as a coordination point for NADP(+).

It belongs to the glutamyl-tRNA reductase family. As to quaternary structure, homodimer.

The enzyme catalyses (S)-4-amino-5-oxopentanoate + tRNA(Glu) + NADP(+) = L-glutamyl-tRNA(Glu) + NADPH + H(+). It functions in the pathway porphyrin-containing compound metabolism; protoporphyrin-IX biosynthesis; 5-aminolevulinate from L-glutamyl-tRNA(Glu): step 1/2. Its pathway is porphyrin-containing compound metabolism; chlorophyll biosynthesis. Catalyzes the NADPH-dependent reduction of glutamyl-tRNA(Glu) to glutamate 1-semialdehyde (GSA). The sequence is that of Glutamyl-tRNA reductase from Prochlorococcus marinus (strain AS9601).